Here is a 237-residue protein sequence, read N- to C-terminus: Golgi anti-apoptotic protein (237 aa).

Residues 1–37 (MAMPSLSACSSIEDDFNYGSSVASASVHIRMAFLRKV) are Cytoplasmic-facing. The helical transmembrane segment at 38–58 (YGILCLQFLLTTATTAVFLYF) threads the bilayer. At 59–67 (DCMRTFIQG) the chain is on the lumenal side. The helical transmembrane segment at 68-88 (SPVLILASMFGSIGLIFALTL) threads the bilayer. At 89 to 94 (HRHKHP) the chain is on the cytoplasmic side. Residues 95-115 (LNLYLLCGFTLSESLTLASVV) form a helical membrane-spanning segment. T116 is a topological domain (lumenal). The chain crosses the membrane as a helical span at residues 117–137 (FYDVHVVMQAFMLTTAAFLAL). The Cytoplasmic segment spans residues 138 to 151 (TTYTLQSKRDFSKL). Residues 152–172 (GAGLFAALWILILSGLLGIFV) form a helical membrane-spanning segment. The Lumenal portion of the chain corresponds to 173–174 (QN). The chain crosses the membrane as a helical span at residues 175 to 195 (ETVKLVLSAFGALVFCGFIIY). At 196–209 (DTHSLIHKLSPEEY) the chain is on the cytoplasmic side. The helical intramembrane region spans 210 to 230 (VLASINLYLDIINLFLHLLQL). Over 231 to 237 (LEVSNKK) the chain is Cytoplasmic.

This sequence belongs to the BI1 family. LFG subfamily.

Its subcellular location is the host Golgi apparatus membrane. In terms of biological role, may affect virulence through inhibition of apoptosis. In Vaccinia virus (strain LC16m0) (VACV), this protein is Golgi anti-apoptotic protein (L6).